Here is a 276-residue protein sequence, read N- to C-terminus: Bifunctional esterase/perhydrolase DCH (276 aa).

In terms of domain architecture, AB hydrolase-1 spans Pro-23–Phe-254. Residues Ser-97, Asp-227, and His-256 contribute to the active site.

Belongs to the AB hydrolase superfamily. Bacterial non-heme haloperoxidase / perhydrolase family. Homodimer.

It carries out the reaction 3,4-dihydrocoumarin + H2O = 3-(2-hydroxyphenyl)propanoate + H(+). The enzyme catalyses peracetic acid + H2O = acetate + H2O2 + H(+). The catalysed reaction is a percarboxylic acid + H2O = a carboxylate + H2O2 + H(+). Inhibited by the serine protease inhibitors diisopropyl fluorophosphate and phenylmethanesulfonyl fluoride. Functionally, multifunctional enzyme, which shows esterase and perhydrolase activities, and is capable of organic acid-assisted bromination of organic compounds. Catalyzes the hydrolysis of 3,4-dihydrocoumarin. Aromatic lactones other than 3,4-dihydrocoumarin, such as 2-coumaranone and homogentisic acid lactone, are also substrates, but their activities relative to that of 3,4-dihydrocoumarin are quite low. Also catalyzes the hydrolysis of several linear esters, with specificity toward methyl esters. In addition, shows perhydrolase activity and catalyzes the dose- and time-dependent degradation of peracetic acid, a broad-spectrum biocide, to acetic acid and hydrogen peroxide. It suggests that in vivo DCH may play a role in the oxidative stress defense system and detoxify peroxoacids in conjunction with the catalase, i.e. peroxoacids are first hydrolyzed to the corresponding acids and hydrogen peroxide by DCH, and then the resulting hydrogen peroxide is degraded by the catalase. Also shows organic acid-assisted bromination activity toward monochlorodimedon when incubated with hydrogen peroxide and dihydrocoumarin or an organic acid, such as acetate and n-butyrate. The protein is Bifunctional esterase/perhydrolase DCH of Acinetobacter calcoaceticus.